A 288-amino-acid chain; its full sequence is Elongation factor Ts (288 aa).

Residues 79–82 (TDFV) are involved in Mg(2+) ion dislocation from EF-Tu.

The protein belongs to the EF-Ts family.

It localises to the cytoplasm. In terms of biological role, associates with the EF-Tu.GDP complex and induces the exchange of GDP to GTP. It remains bound to the aminoacyl-tRNA.EF-Tu.GTP complex up to the GTP hydrolysis stage on the ribosome. This chain is Elongation factor Ts, found in Ehrlichia canis (strain Jake).